We begin with the raw amino-acid sequence, 554 residues long: ATP-dependent RNA helicase MRH4, mitochondrial (554 aa).

A mitochondrion-targeting transit peptide spans 1–54 (MSSVGIASASLWLRGPVKSALKGRWLSCEQMRRYGTKSAPAVRKGGHSKKARQA). Positions 119-140 (DCGLDDKRVAAFLGQVQPTPIQ) match the Q motif motif. The region spanning 150-337 (TLMEPQLQVH…NKLFPNLQVV (188 aa)) is the Helicase ATP-binding domain. 163-170 (AETGSGKT) contacts ATP. Residues 285–288 (DEAD) carry the DEAD box motif. The region spanning 368–554 (ALAQALYAIM…PVVKKNRPIQ (187 aa)) is the Helicase C-terminal domain. Residues 439–474 (RIQDQVRPSELKKPQERRLPNSNIKVADSKDNGQRS) are disordered. Residues 445-457 (RPSELKKPQERRL) are compositionally biased toward basic and acidic residues.

This sequence belongs to the DEAD box helicase family. MRH4 subfamily.

Its subcellular location is the mitochondrion. The catalysed reaction is ATP + H2O = ADP + phosphate + H(+). Functionally, ATP-binding RNA helicase involved in mitochondrial RNA metabolism. Required for maintenance of mitochondrial DNA. The chain is ATP-dependent RNA helicase MRH4, mitochondrial (MRH4) from Eremothecium gossypii (strain ATCC 10895 / CBS 109.51 / FGSC 9923 / NRRL Y-1056) (Yeast).